The sequence spans 211 residues: FMN-dependent NADH:quinone oxidoreductase (211 aa).

Position 17–19 (17–19 (SYS)) interacts with FMN.

Belongs to the azoreductase type 1 family. Homodimer. FMN is required as a cofactor.

It catalyses the reaction 2 a quinone + NADH + H(+) = 2 a 1,4-benzosemiquinone + NAD(+). The enzyme catalyses N,N-dimethyl-1,4-phenylenediamine + anthranilate + 2 NAD(+) = 2-(4-dimethylaminophenyl)diazenylbenzoate + 2 NADH + 2 H(+). Quinone reductase that provides resistance to thiol-specific stress caused by electrophilic quinones. In terms of biological role, also exhibits azoreductase activity. Catalyzes the reductive cleavage of the azo bond in aromatic azo compounds to the corresponding amines. The chain is FMN-dependent NADH:quinone oxidoreductase from Bacillus pumilus (strain SAFR-032).